The chain runs to 269 residues: 4-hydroxy-4-methyl-2-oxoglutarate aldolase cghB (269 aa).

The active-site Proton acceptor is the histidine 48. A divalent metal cation is bound by residues glutamate 155 and aspartate 181. Aspartate 181 contributes to the substrate binding site.

Belongs to the HpcH/HpaI aldolase family. Homohexamer; trimer of dimers. Co(2+) serves as cofactor. The cofactor is Mn(2+). Zn(2+) is required as a cofactor. Requires Fe(2+) as cofactor. It depends on Mg(2+) as a cofactor.

It carries out the reaction 4-hydroxy-4-methyl-2-oxoglutarate = 2 pyruvate. It participates in secondary metabolite biosynthesis. In terms of biological role, 4-hydroxy-4-methyl-2-oxoglutarate aldolase; part of the gene cluster that mediates the biosynthesis of the tetramic acid Sch210972, a potential anti-HIV fungal natural product that contains a decalin core. The PKS module of cghG together with the enoylreductase cghC catalyze the formation of the polyketide unit which is then conjugated to 4-hydroxyl-4-methyl glutamate (HMG) by the condensation domain of the cghG NRPS module. One unique structural feature of Sch210972 is the tetramic acid motif proposed to be derived from the non-proteinogenic amino acid HMG, by a Dieckmann-type condensation catalyzed by the reductase domain of cghG. The aldolase cghB catalyzes the aldol condensation of 2 molecules of pyruvic acid to yield the intermediate 4-hydroxyl-4-methyl-2-oxoglutarate (HMOG), which can then be stereoselectively transaminated by an unidentified enzyme to form HMG. The Diels-Alderase cghA then uses the Dieckmann product released by cghG as substrate and catalyzes the Diels-Alder cycloaddition to form the decalin ring of Sch210972. CghA also suppresses the nonenzymatic formation of the alternative stereoisomer. In Chaetomium globosum (strain ATCC 6205 / CBS 148.51 / DSM 1962 / NBRC 6347 / NRRL 1970) (Soil fungus), this protein is 4-hydroxy-4-methyl-2-oxoglutarate aldolase cghB.